The sequence spans 577 residues: Serine/threonine-protein kinase AGC1-5 (577 aa).

Positions 1–12 (MDLASKKNTANV) are enriched in polar residues. Residues 1-151 (MDLASKKNTA…DYAYGDNLVG (151 aa)) form a disordered region. Positions 44–55 (PHFDPKKMDPLV) are enriched in basic and acidic residues. Polar residues-rich tracts occupy residues 69 to 87 (TRGT…SSDG) and 110 to 120 (LTTSETYSPSA). One can recognise a Protein kinase domain in the interval 185-509 (FRLLKRLGYG…ATEIKQHPFF (325 aa)). Residues 191–199 (LGYGDIGSV) and Lys214 contribute to the ATP site. The active-site Proton acceptor is the Asp310. Residues 510–577 (EGVNWALVRS…DTAYIDFEYF (68 aa)) form the AGC-kinase C-terminal domain.

This sequence belongs to the protein kinase superfamily. AGC Ser/Thr protein kinase family. In terms of assembly, interacts with PDPK1/PDK1. Autophosphorylated and phosphorylated by PDPK1/PDK1. Specifically expressed in pollen grains.

It carries out the reaction L-seryl-[protein] + ATP = O-phospho-L-seryl-[protein] + ADP + H(+). It catalyses the reaction L-threonyl-[protein] + ATP = O-phospho-L-threonyl-[protein] + ADP + H(+). Its activity is regulated as follows. Activated by PDPK1/PDK1. Functionally, functions redudantly with AGC1-7 as signaling component in the pollen tube. Required for polarized growth of pollen tubes. The chain is Serine/threonine-protein kinase AGC1-5 from Arabidopsis thaliana (Mouse-ear cress).